The primary structure comprises 118 residues: UPF0342 protein BAMEG_3696 (118 aa).

Belongs to the UPF0342 family.

The polypeptide is UPF0342 protein BAMEG_3696 (Bacillus anthracis (strain CDC 684 / NRRL 3495)).